The following is a 137-amino-acid chain: Profilin-3 (137 aa).

This sequence belongs to the profilin family. Interacts with ACTRT3. As to expression, testis specific.

Its subcellular location is the cytoplasm. It is found in the cytoskeleton. The protein resides in the nucleus. Its function is as follows. Binds to actin and affects the structure of the cytoskeleton. Slightly reduces actin polymerization. Binds to poly-L-proline, phosphatidylinositol 3-phosphate (PtdIns(3)P), phosphatidylinositol 4,5-bisphosphate (PtdIns(4,5)P2) and phosphatidylinositol 4-phosphate (PtdIns(4)P). May be involved in spermatogenesis. The sequence is that of Profilin-3 (PFN3) from Homo sapiens (Human).